The primary structure comprises 122 residues: Large ribosomal subunit protein uL14c (122 aa).

This sequence belongs to the universal ribosomal protein uL14 family. In terms of assembly, part of the 50S ribosomal subunit.

It localises to the plastid. The protein localises to the chloroplast. Functionally, binds to 23S rRNA. This Illicium oligandrum (Star anise) protein is Large ribosomal subunit protein uL14c.